Consider the following 149-residue polypeptide: Large ribosomal subunit protein bL9 (149 aa).

The protein belongs to the bacterial ribosomal protein bL9 family.

In terms of biological role, binds to the 23S rRNA. The chain is Large ribosomal subunit protein bL9 from Vibrio cholerae serotype O1 (strain ATCC 39541 / Classical Ogawa 395 / O395).